The chain runs to 375 residues: Erythronate-4-phosphate dehydrogenase (375 aa).

A substrate-binding site is contributed by S49. The NAD(+) site is built by D150 and T178. Residue R211 is part of the active site. An NAD(+)-binding site is contributed by D231. Residue E236 is part of the active site. The Proton donor role is filled by H253. G256 is an NAD(+) binding site.

It belongs to the D-isomer specific 2-hydroxyacid dehydrogenase family. PdxB subfamily. In terms of assembly, homodimer.

The protein localises to the cytoplasm. The enzyme catalyses 4-phospho-D-erythronate + NAD(+) = (R)-3-hydroxy-2-oxo-4-phosphooxybutanoate + NADH + H(+). The protein operates within cofactor biosynthesis; pyridoxine 5'-phosphate biosynthesis; pyridoxine 5'-phosphate from D-erythrose 4-phosphate: step 2/5. Catalyzes the oxidation of erythronate-4-phosphate to 3-hydroxy-2-oxo-4-phosphonooxybutanoate. In Hydrogenovibrio crunogenus (strain DSM 25203 / XCL-2) (Thiomicrospira crunogena), this protein is Erythronate-4-phosphate dehydrogenase.